We begin with the raw amino-acid sequence, 374 residues long: LRR repeats and ubiquitin-like domain-containing protein At2g30105 (374 aa).

The region spanning Ile13–His87 is the Ubiquitin-like domain. LRR repeat units follow at residues Trp128–Cys151, Gly152–Phe175, Ser177–Ser200, Leu201–Leu224, Thr225–Thr248, Leu250–Cys270, Phe272–Leu293, Arg294–Met316, and Leu318–Gly340.

In Arabidopsis thaliana (Mouse-ear cress), this protein is LRR repeats and ubiquitin-like domain-containing protein At2g30105.